The sequence spans 84 residues: Toxin NvePTx1 (84 aa).

Positions 1-21 (MFSARLVLVFAVVLCIQLCNA) are cleaved as a signal peptide. Positions 22 to 34 (SWLDERAMTQEKR) are excised as a propeptide.

This sequence belongs to the sea anemone type 5 potassium channel toxin family. Contains 4 disulfide bonds. In unfertilized eggs and early post-fertilization stages, is expressed uniformly. In gastrulae, the expression becomes spatially-localized and seems to be absent from the oral and aboral poles. In planulae, the expression is clearly observed in the ectoderm in packed gland cells absent from the two body poles, and upon metamorphosis, the expression diminishes. There is two types of gland cells, one large and elongated and another small and round. This toxin is maternally deposited at both protein and RNA levels.

The protein resides in the secreted. It is found in the nematocyst. Functionally, neurotoxin that is probably only defensive. Acts as a voltage-gated potassium channel (Kv) inhibitor. In vivo, induces a rapid increase in swimming speed on zebrafish larvae, as well as death which occurs between 2 and 18 hours later. This chain is Toxin NvePTx1, found in Nematostella vectensis (Starlet sea anemone).